The primary structure comprises 355 residues: Syntaxin-5 (355 aa).

The Cytoplasmic portion of the chain corresponds to 1 to 333; it reads MIPRKRYGSK…KYFQSVTSNR (333 aa). An IxM motif; signal for cargo packaging into COPII-coated vesicles motif is present at residues 245-247; that stretch reads IDM. A t-SNARE coiled-coil homology domain is found at 263 to 325; the sequence is DSYIQSRADT…EAAHSEILKY (63 aa). A coiled-coil region spans residues 287 to 318; the sequence is FQQLAHMVKEQEETIQRIDENVLGAQLDVEAA. A helical; Anchor for type IV membrane protein membrane pass occupies residues 334-354; it reads WLMVKIFLILIVFFIIFVVFL. A355 is a topological domain (vesicular).

Belongs to the syntaxin family. Part of a ternary complex containing STX5A, NSFL1C and VCP. Part of a unique SNARE complex composed of the Golgi SNAREs GOSR1, GOSR2, YKT6 and VTI1A. Component of a SNARE complex consisting of STX5, YKT6, GOSR1 and BET1L. Interacts with BET1L. Interacts with BET1. Interacts with COG4. Interacts with GM130/GOLGA2. Interacts (via IxM motif) with SEC24C and SEC24D; mediates STX5 packaging into COPII-coated vesicles. Interacts with VLDLR; this interaction mediates VLDLR translocation from the endoplasmic reticulum to the plasma membrane.

It localises to the endoplasmic reticulum-Golgi intermediate compartment membrane. Its subcellular location is the golgi apparatus membrane. Its function is as follows. Mediates endoplasmic reticulum to Golgi transport. Together with p115/USO1 and GM130/GOLGA2, involved in vesicle tethering and fusion at the cis-Golgi membrane to maintain the stacked and inter-connected structure of the Golgi apparatus. Required for Golgi to endoplasmic reticulum retrogade transport, and for intra-Golgi transport. This chain is Syntaxin-5 (Stx5), found in Mus musculus (Mouse).